A 357-amino-acid chain; its full sequence is Probable RNA methyltransferase Daro_1157 (357 aa).

E91 acts as the Proton acceptor in catalysis. Residues 94–320 (LLPRDGLCIS…TTVRNSAGQD (227 aa)) form the Radical SAM core domain. Residues C101 and C325 are joined by a disulfide bond. [4Fe-4S] cluster is bound by residues C108, C112, and C115. S-adenosyl-L-methionine is bound by residues 153–154 (GE), S183, 206–208 (SLH), and N282. The active-site S-methylcysteine intermediate is C325.

This sequence belongs to the radical SAM superfamily. RlmN family. The cofactor is [4Fe-4S] cluster.

The protein resides in the cytoplasm. In Dechloromonas aromatica (strain RCB), this protein is Probable RNA methyltransferase Daro_1157.